The sequence spans 276 residues: Proteasome subunit beta type-8 (276 aa).

Residues 1–33 (MALLDVCGAPRGQRPESALPVAGSGRRSDPGHY) form a disordered region. The propeptide at 1-72 (MALLDVCGAP…RNVQIEMAHG (72 aa)) is removed in mature form. Residue D5 is modified to Phosphothreonine. The Nucleophile role is filled by T73.

The protein belongs to the peptidase T1B family. As to quaternary structure, the 26S proteasome consists of a 20S proteasome core and two 19S regulatory subunits. The 20S proteasome core is composed of 28 subunits that are arranged in four stacked rings, resulting in a barrel-shaped structure. The two end rings are each formed by seven alpha subunits, and the two central rings are each formed by seven beta subunits. The catalytic chamber with the active sites is on the inside of the barrel. Component of the immunoproteasome, where it displaces the equivalent housekeeping subunit PSMB5. Component of the spermatoproteasome, a form of the proteasome specifically found in testis. Directly interacts with POMP. Interacts with TAP1. (Microbial infection) Interacts with HIV-1 TAT protein. In terms of processing, autocleaved. The resulting N-terminal Thr residue of the mature subunit is responsible for the nucleophile proteolytic activity.

It is found in the cytoplasm. The protein resides in the nucleus. The catalysed reaction is Cleavage of peptide bonds with very broad specificity.. In terms of biological role, the proteasome is a multicatalytic proteinase complex which is characterized by its ability to cleave peptides with Arg, Phe, Tyr, Leu, and Glu adjacent to the leaving group at neutral or slightly basic pH. The proteasome has an ATP-dependent proteolytic activity. This subunit is involved in antigen processing to generate class I binding peptides. Replacement of PSMB5 by PSMB8 increases the capacity of the immunoproteasome to cleave model peptides after hydrophobic and basic residues. Involved in the generation of spliced peptides resulting from the ligation of two separate proteasomal cleavage products that are not contiguous in the parental protein. Acts as a major component of interferon gamma-induced sensitivity. Plays a key role in apoptosis via the degradation of the apoptotic inhibitor MCL1. May be involved in the inflammatory response pathway. In cancer cells, substitution of isoform 1 (E2) by isoform 2 (E1) results in immunoproteasome deficiency. Required for the differentiation of preadipocytes into adipocytes. The protein is Proteasome subunit beta type-8 (PSMB8) of Homo sapiens (Human).